Here is a 461-residue protein sequence, read N- to C-terminus: Cysteine--tRNA ligase (461 aa).

C28 lines the Zn(2+) pocket. A 'HIGH' region motif is present at residues 30 to 40; sequence ITVYDLCHIGH. The Zn(2+) site is built by C209, H234, and E238. A 'KMSKS' region motif is present at residues 266–270; that stretch reads KMSKS. K269 lines the ATP pocket.

It belongs to the class-I aminoacyl-tRNA synthetase family. As to quaternary structure, monomer. It depends on Zn(2+) as a cofactor.

It is found in the cytoplasm. It catalyses the reaction tRNA(Cys) + L-cysteine + ATP = L-cysteinyl-tRNA(Cys) + AMP + diphosphate. The sequence is that of Cysteine--tRNA ligase from Salmonella arizonae (strain ATCC BAA-731 / CDC346-86 / RSK2980).